A 350-amino-acid polypeptide reads, in one-letter code: MKKTRTANLHHLYHEALPEDVKLTPRVEVDNVHQRRTTDVYEHALTITAWQQIYDQLHPGKFHGEFTEILLDEIQVFREYTGLALRQSCLVWPNSFWFGIPATRGEQGFIGAQGLGSAEIATRPGGTEFELSTPDDYTILGVVISEDVISRQATFLHNPERVLHMLRNQLALEVKEQHKAALWGFVQQALATFSESPETLHQPAVRKVLSDNLLLAMGTMLEEAKPIHSAESISHQGYRRLLSRAREYVLENMSEPLTVLDLCNQLHVSRRTLQNAFHAILGIGPNAWLKRIRLNAVRRELISPWSQSATVKDAAMQWGFWHLGQFATDYQQLFAEKPSLTLHQRMRQWA.

The HTH araC/xylS-type domain maps to 243–344 (SRAREYVLEN…AEKPSLTLHQ (102 aa)). 2 DNA-binding regions (H-T-H motif) span residues 260–281 (LDLC…HAIL) and 311–334 (VKDA…QQLF).

It participates in amine and polyamine degradation; ethanolamine degradation. Its function is as follows. Activates the transcription of the eut operon, allowing utilization of ethanolamine (EA). Positively regulates its own transcription. Probably binds EA and vitamin B12 as effectors. Competes with ethanolamine ammonia-lysase (EAL, the first enzyme in the EA degradation pathway) for adenosylcobalamin. Ethanolamine-associated signaling mediated via this protein, but not EA degradation, impacts S.typhimurium survival within macrophages. Binds the promoter of ssrB and eutS in vitro; in mouse infection models binding to ssrB probably induces all 4 operons of pathogenicity island SPI-2. Functionally, expression of the eut operon allows this bacteria to use ethanolamine (EA) as a carbon, nitrogen and energy source. It relies on cobalamin (vitamin B12) both as a cofactor for the ethanolamine ammonia-lyase (EAL) activity and to induce the operon. EA enhances bacterial survival in macrophages in a concentration-dependent manner, suggesting it is an important nutrient in infection. This chain is HTH-type DNA-binding transcriptional activator EutR, found in Salmonella typhimurium (strain LT2 / SGSC1412 / ATCC 700720).